A 913-amino-acid chain; its full sequence is SUN domain-containing protein 1 (913 aa).

The tract at residues 1-139 (MDFSRLHTYT…VLRHPVLDES (139 aa)) is LMNA-binding. Residues 1–415 (MDFSRLHTYT…LTRCLRNICK (415 aa)) lie on the Nuclear side of the membrane. Phosphoserine occurs at positions 48 and 66. The span at 69–81 (SQAIDSHISTSRA) shows a compositional bias: polar residues. Residues 69–120 (SQAIDSHISTSRATPAKGRETRTVKQRRSASKPAFSINHLSGKGLSSSTSHD) form a disordered region. Over residues 108 to 120 (LSGKGLSSSTSHD) the composition is skewed to low complexity. Ser139 carries the post-translational modification Phosphoserine. Residues 209–302 (SRVYSRDRTL…MTAGELSRVD (94 aa)) are SYNE2-binding. The tract at residues 223 to 302 (VSFYLDRTLW…MTAGELSRVD (80 aa)) is EMD-binding. The helical transmembrane segment at 416-436 (VFVLLLPLLLLLGAGVSLWGQ) threads the bilayer. At 437–913 (GNFFSLLPVL…RFRVHGEPIQ (477 aa)) the chain is on the perinuclear space side. The disordered stretch occupies residues 456–485 (RVDDSKGMHRPGPLPPSPPPKVDHKASQWP). Coiled-coil stretches lie at residues 491 to 533 (GQKV…EGLS) and 563 to 638 (HHDH…CEQA). The interval 703 to 913 (TSEAIVSAVN…RFRVHGEPIQ (211 aa)) is sufficient for interaction with SYNE1 and SYNE2. Positions 751–912 (GGSILSTRCS…YRFRVHGEPI (162 aa)) constitute an SUN domain.

In terms of assembly, core component of the LINC complex which is composed of inner nuclear membrane SUN domain-containing proteins coupled to outer nuclear membrane KASH domain-containing nesprins. SUN and KASH domain-containing proteins seem to bind each other promiscuously; however, differentially expression of LINC complex constituents is giving rise to specific assemblies. At least SUN1/2-containing core LINC complexes are proposed to be hexameric composed of three protomers of each KASH and SUN domain-containing protein. Interacts with KASH5 (via the last 22 amino acids); this interaction mediates KASH5 telomere localization by forming a SUN1:KASH5 LINC complex. Isoform 5 is proposed to form a non-nuclear spermatogenesis-specific LINC complex with SYNE3 during sperm head formation. Interacts with SYNE2 and SYNE1; probably forming respective LINC complexes. Interacts with A-type lamin with a strong preference for unprocessed A-type lamin compared with the mature protein. Interaction with lamins B1 and C is hardly detectable. Interacts with NAT10. Interacts with EMD and TSNAX. Associates with the nuclear pore complex (NPC). Interacts with CCDC79/TERB1; promoting the accumulation of the LINC complex complexes at the telomere-nuclear envelope attachment sites. Interacts with IRAG2. Interacts (via KASH domain) with TMEM258. Post-translationally, the disulfide bond with KASH domain-containing nesprins is required for stability of the respective LINC complexes under tensile forces. As to expression, widely expressed. Expressed in cochlear outer hair cells (at protein level). Seven isoforms are expressed in testis including testis-specific isoform 5. Isoform 5 is the only isoform expressed at the end of sperm differentiation. Six isoforms are expressed in muscle, heart and brain, four isoforms in kidney and three isoforms in liver.

The protein localises to the nucleus inner membrane. It localises to the cytoplasmic vesicle. The protein resides in the secretory vesicle. It is found in the acrosome outer membrane. Functionally, as a component of the LINC (LInker of Nucleoskeleton and Cytoskeleton) complex involved in the connection between the nuclear lamina and the cytoskeleton. The nucleocytoplasmic interactions established by the LINC complex play an important role in the transmission of mechanical forces across the nuclear envelope and in nuclear movement and positioning. Required for interkinetic nuclear migration (INM) and essential for nucleokinesis and centrosome-nucleus coupling during radial neuronal migration in the cerebral cortex and during glial migration. Involved in telomere attachment to nuclear envelope in the prophase of meiosis implicating a SUN1/2:KASH5 LINC complex in which SUN1 and SUN2 seem to act at least partial redundantly. Required for gametogenesis and involved in selective gene expression of coding and non-coding RNAs needed for gametogenesis. Helps to define the distribution of nuclear pore complexes (NPCs). Required for efficient localization of SYNE4 in the nuclear envelope. May be involved in nuclear remodeling during sperm head formation in spermatogenesis. May play a role in DNA repair by suppressing non-homologous end joining repair to facilitate the repair of DNA cross-links. Its function is as follows. Isoform 5 may be involved in nuclear remodeling during sperm head formation in spermatogenesis. A probable SUN1 isoform 5:SYNE3 LINC complex may tether spermatid nuclei to anterior cytoskeletal structures such as actin filaments present at membraneous junctions of spermatids and Sertoli cells. This Mus musculus (Mouse) protein is SUN domain-containing protein 1.